A 142-amino-acid chain; its full sequence is MAISDSVSPEPQQLLCLTITAFRKPGMSEAAYREYMTKTHAPLVSGLMEEYGIVRYNMTHNNSKSRPLLFQLYDPEFSKLSDYDCIVQFVFRRMEDFLRMKSDPRFLEKVAPDHQKFADTSRSTMTIGYFEEFLENGKVVPK.

In terms of domain architecture, EthD spans 25 to 121; it reads PGMSEAAYRE…PDHQKFADTS (97 aa).

It belongs to the tpcK family.

It functions in the pathway pigment biosynthesis. Dehydratase; part of the Pks1 gene cluster that mediates the biosynthesis of an anthraquinone derivative pigment that contributes to conidial pigmentation that provides protection from UV radiation, heat and cold stress. The polyketide synthase Pks1 produces 1-acetyl-2,4,6,8-tetrahydroxy-9,10-anthraquinone though condensation of acetyl-CoA with malonyl-CoA. The dehydratase EthD and the laccase Mlac1 further convert the anthraquinone derivative into the final conidial pigment. The sequence is that of Conidial pigment biosynthesis dehydratase EthD from Metarhizium robertsii (strain ARSEF 23 / ATCC MYA-3075) (Metarhizium anisopliae (strain ARSEF 23)).